The following is a 74-amino-acid chain: DNA-directed RNA polymerase subunit omega (74 aa).

The protein belongs to the RNA polymerase subunit omega family. The RNAP catalytic core consists of 2 alpha, 1 beta, 1 beta' and 1 omega subunit. When a sigma factor is associated with the core the holoenzyme is formed, which can initiate transcription.

It catalyses the reaction RNA(n) + a ribonucleoside 5'-triphosphate = RNA(n+1) + diphosphate. Its function is as follows. Promotes RNA polymerase assembly. Latches the N- and C-terminal regions of the beta' subunit thereby facilitating its interaction with the beta and alpha subunits. The protein is DNA-directed RNA polymerase subunit omega of Campylobacter jejuni subsp. jejuni serotype O:6 (strain 81116 / NCTC 11828).